Reading from the N-terminus, the 155-residue chain is Small ribosomal subunit protein uS7 (155 aa).

Belongs to the universal ribosomal protein uS7 family. As to quaternary structure, part of the 30S ribosomal subunit. Contacts proteins S9 and S11.

Its function is as follows. One of the primary rRNA binding proteins, it binds directly to 16S rRNA where it nucleates assembly of the head domain of the 30S subunit. Is located at the subunit interface close to the decoding center, probably blocks exit of the E-site tRNA. This chain is Small ribosomal subunit protein uS7, found in Desulforapulum autotrophicum (strain ATCC 43914 / DSM 3382 / VKM B-1955 / HRM2) (Desulfobacterium autotrophicum).